The sequence spans 160 residues: uncharacterized protein (160 aa).

In terms of domain architecture, N-acetyltransferase spans 2–140; it reads MIIIPNNEIA…KARRLKPEIP (139 aa).

This is an uncharacterized protein from Bacillus subtilis (strain 168).